We begin with the raw amino-acid sequence, 352 residues long: Uroporphyrinogen decarboxylase (352 aa).

Residues 27–31 (RQAGR), Asp-77, Tyr-154, Thr-209, and His-325 contribute to the substrate site.

Belongs to the uroporphyrinogen decarboxylase family. Homodimer.

The protein localises to the cytoplasm. The enzyme catalyses uroporphyrinogen III + 4 H(+) = coproporphyrinogen III + 4 CO2. The protein operates within porphyrin-containing compound metabolism; protoporphyrin-IX biosynthesis; coproporphyrinogen-III from 5-aminolevulinate: step 4/4. In terms of biological role, catalyzes the decarboxylation of four acetate groups of uroporphyrinogen-III to yield coproporphyrinogen-III. This chain is Uroporphyrinogen decarboxylase, found in Legionella pneumophila (strain Lens).